A 194-amino-acid chain; its full sequence is Translation machinery-associated protein 22 (194 aa).

The 72-residue stretch at 102–173 (VQIKRVERNK…DVQDWLLEVY (72 aa)) folds into the SUI1 domain.

The protein belongs to the DENR family. Interacts with the 40S ribosomal subunit.

It is found in the cytoplasm. This chain is Translation machinery-associated protein 22 (tma22), found in Aspergillus oryzae (strain ATCC 42149 / RIB 40) (Yellow koji mold).